Consider the following 192-residue polypeptide: MLKKTFAALALGTALLSAGQAMAAEYKIDKEGQHAFVDWKISHLGYSFIHGTFKDFDGNFSWDSAKPEASKISVDLKTASLWSNHAERDKHIASADFLDVKKYPDAKFVSTSVKSTGDKTADVTGDLTMHGVTKPVTFKATFNGEGKDPWGGERAGFNATTTLNLNDFGIKGPGATSQTLDLDISVEGVKQK.

A signal peptide spans 1 to 23; that stretch reads MLKKTFAALALGTALLSAGQAMA.

This sequence belongs to the UPF0312 family. Type 1 subfamily.

It localises to the periplasm. The chain is UPF0312 protein Pput_4854 from Pseudomonas putida (strain ATCC 700007 / DSM 6899 / JCM 31910 / BCRC 17059 / LMG 24140 / F1).